A 185-amino-acid polypeptide reads, in one-letter code: Ribosome-recycling factor (185 aa).

It belongs to the RRF family.

The protein resides in the cytoplasm. In terms of biological role, responsible for the release of ribosomes from messenger RNA at the termination of protein biosynthesis. May increase the efficiency of translation by recycling ribosomes from one round of translation to another. This is Ribosome-recycling factor from Syntrophus aciditrophicus (strain SB).